The chain runs to 615 residues: MALLQIAEPGQSAAPHQHKRAVGIDLGTTNSLVAAVRSGHADTLCDEQGRDLLPSVVHYQVDAIRVGFDAKREASLDPHNTIVSAKRMMGKALADIDTRQQPYEFVAADNGMPQLQTRQGLVNPVQVSAEILKKLAERGAAALGGELDGVVITVPAYFDDAQRQGTKDAARLAGLHVLRLLNEPTAAAIAYGLDSGQEGVIAVYDLGGGTFDISILRLHRGVFEVMATGGDSALGGDDFDHLLADWIKAQAGLEGQLDASTQRELLDVAAAVKHGLTDADLVPCAFAGWQGEVSRHLFEELITPLVKRTLLACRRALRDAGLEQVEVLEVVMVGGSTRVPLVRERVGEFFQRTPLTSIDPDKVVAIGAAIQADILVGNKPDAEMLLLDVIPLSLGLETMGGLAEKVIPRNTTIPVARAQEFTTFKDGQTAMAIHVVQGERELVADCRSLARFTLTGIPPMAAGAAHIRVTFQVDADGLLSVSAMEKSSGVQAEIQVKPSYGLGEEDILTMLSASIANAQQDMDARMLAEQQVEADRVVESLNAALAADGDALLSTAERAAIDSAITHVLSVRAAGTTNQIKDAIEAADAVSGEFAARRMDASIRKVLTGQNVNKV.

The protein belongs to the heat shock protein 70 family.

Functionally, chaperone involved in the maturation of iron-sulfur cluster-containing proteins. Has a low intrinsic ATPase activity which is markedly stimulated by HscB. This Aeromonas salmonicida (strain A449) protein is Chaperone protein HscA homolog.